Consider the following 307-residue polypeptide: Taste receptor type 2 member 41 (307 aa).

Residues 1 to 7 (MQAALTA) are Extracellular-facing. The chain crosses the membrane as a helical span at residues 8-28 (FFMLFFSLLSLLGIAANGFIV). Topologically, residues 29–40 (LVLGREWLQYGR) are cytoplasmic. Residues 41–61 (LLPLDMILISLGVSRFCLQLV) form a helical membrane-spanning segment. At 62-88 (GTVYNFYYSAHKVEYSGGLSRQFFHLH) the chain is on the extracellular side. The helical transmembrane segment at 89–109 (WHFLNLATFXFCSWLSVLFCV) threads the bilayer. Topologically, residues 110–129 (KXANITHPTFLWLKWRFPGW) are cytoplasmic. The helical transmembrane segment at 130 to 150 (VPWLLLGSVLISFIITLLLFW) threads the bilayer. Residues 151–183 (VNYPVYQEFLIRKFSGNMTYEWNTRIEMYYLPS) lie on the Extracellular side of the membrane. A glycan (N-linked (GlcNAc...) asparagine) is linked at Asn167. A helical transmembrane segment spans residues 184-204 (LKLVIWSIPCSVFLVSIMLLI). At 205 to 234 (NSLRRHTWRMQHNGHSLQDPSTQAHTRAXK) the chain is on the cytoplasmic side. The chain crosses the membrane as a helical span at residues 235-255 (SLISFLILYVLSFLSLIIDAT). At 256–264 (KFISMQNDF) the chain is on the extracellular side. The chain crosses the membrane as a helical span at residues 265-285 (YWPWQTAVYLGVSVHPFILIF). The Cytoplasmic portion of the chain corresponds to 286–307 (SNLKLRSVFWKLLLLARGFWVA).

Belongs to the G-protein coupled receptor T2R family.

Its subcellular location is the membrane. Receptor that may play a role in the perception of bitterness and is gustducin-linked. May play a role in sensing the chemical composition of the gastrointestinal content. The activity of this receptor may stimulate alpha gustducin, mediate PLC-beta-2 activation and lead to the gating of TRPM5. This is Taste receptor type 2 member 41 (TAS2R41) from Pongo pygmaeus (Bornean orangutan).